The chain runs to 317 residues: MLTFQHIILRLQDYWDRQGCALLQPYDMEVGAGTSHTATFLRALGPEPWKAAYVQPSRRPKDGRYGNNPNRLQHYYQYQVVLKPAPANILDLYLGSLEALGFDLKKNDIRFVEDDWENPTLGAWGLGWEVWLNGMEVTQFTYFQQVGGIDCKPITGEITYGLERLAMYLQGVENVYDLQYAPGLTYGDVFHQNEVEQSTYNFEHSNVEFLLSAFGAHEGNAQELMAQQLALPAYEQVLKAAHTFNLLDARGAISVTERAAYIGRIRNLARAVAAAYLDSRARLGFPMAPRAWADEIGAKLAAEAEKAALKNEAKKAA.

Belongs to the class-II aminoacyl-tRNA synthetase family. As to quaternary structure, tetramer of two alpha and two beta subunits.

The protein localises to the cytoplasm. It catalyses the reaction tRNA(Gly) + glycine + ATP = glycyl-tRNA(Gly) + AMP + diphosphate. The polypeptide is Glycine--tRNA ligase alpha subunit (Leptothrix cholodnii (strain ATCC 51168 / LMG 8142 / SP-6) (Leptothrix discophora (strain SP-6))).